A 597-amino-acid chain; its full sequence is Dynein intermediate chain 3, ciliary (597 aa).

WD repeat units follow at residues 159-210, 213-253, 260-301, 314-354, 361-400, 404-444, and 449-488; these read EIKR…KPEF, KPVS…QAVE, SHHD…EPTE, ENAQ…PPEK, EHIG…SSIM, YHMS…KDPT, and VSDD…CTMQ. Disordered stretches follow at residues 512 to 546 and 562 to 597; these read RQRE…VAAA and AAQQ…EKEG. A compositionally biased stretch (acidic residues) spans 528-542; that stretch reads QDDDEEGGPDEEEDL. Residues 584–597 are compositionally biased toward basic and acidic residues; it reads GSEKKDTENGEKEG.

This sequence belongs to the dynein intermediate chain family. As to quaternary structure, consists of at least two heavy chains (alpha and beta), three intermediate chains and several light chains.

It localises to the cytoplasm. The protein localises to the cytoskeleton. The protein resides in the cilium axoneme. In terms of biological role, may play a role in the regulation of dynein heavy chain activity. This Heliocidaris crassispina (Sea urchin) protein is Dynein intermediate chain 3, ciliary.